A 444-amino-acid polypeptide reads, in one-letter code: C4-dicarboxylate transport protein (444 aa).

Transmembrane regions (helical) follow at residues 19-39 (HLYF…HFYP), 55-75 (LVKM…IAGM), 90-110 (IYFL…SNIL), 161-181 (ILQV…VGDL), 199-219 (LVAI…AFTI), 230-250 (LAFL…VVLG), 343-363 (LLLV…AGFI), and 366-386 (AATL…ILGI).

The protein belongs to the dicarboxylate/amino acid:cation symporter (DAACS) (TC 2.A.23) family.

The protein resides in the cell inner membrane. In terms of biological role, responsible for the transport of dicarboxylates such as succinate, fumarate, and malate from the periplasm across the membrane. The chain is C4-dicarboxylate transport protein from Allorhizobium ampelinum (strain ATCC BAA-846 / DSM 112012 / S4) (Agrobacterium vitis (strain S4)).